We begin with the raw amino-acid sequence, 485 residues long: ATP-dependent protease ATPase subunit HslU (485 aa).

Residues I22 and G64 to E69 contribute to the ATP site. The interval K146 to M189 is disordered. Positions A149–Q177 are enriched in polar residues. Residues A178–M189 show a composition bias toward basic and acidic residues. Residues D297, E363, and R435 each contribute to the ATP site.

It belongs to the ClpX chaperone family. HslU subfamily. As to quaternary structure, a double ring-shaped homohexamer of HslV is capped on each side by a ring-shaped HslU homohexamer. The assembly of the HslU/HslV complex is dependent on binding of ATP.

The protein localises to the cytoplasm. Functionally, ATPase subunit of a proteasome-like degradation complex; this subunit has chaperone activity. The binding of ATP and its subsequent hydrolysis by HslU are essential for unfolding of protein substrates subsequently hydrolyzed by HslV. HslU recognizes the N-terminal part of its protein substrates and unfolds these before they are guided to HslV for hydrolysis. The polypeptide is ATP-dependent protease ATPase subunit HslU (Treponema denticola (strain ATCC 35405 / DSM 14222 / CIP 103919 / JCM 8153 / KCTC 15104)).